Reading from the N-terminus, the 291-residue chain is Lysosomal amino acid transporter 1 homolog (291 aa).

The Lumenal segment spans residues 1 to 37 (MVWKKLGSRNFSSCPSGSIQWIWDVLGECAQDGWDEA). Asn-10 is a glycosylation site (N-linked (GlcNAc...) asparagine). Positions 34-100 (WDEASVGLGL…LADQLPLQTY (67 aa)) constitute a PQ-loop 1 domain. The chain crosses the membrane as a helical span at residues 38-58 (SVGLGLISILCFAASTFPQFI). The Cytoplasmic segment spans residues 59–71 (KAYKTGNMDQALS). A helical transmembrane segment spans residues 72–92 (LWFLLGWIGGDSCNLIGSFLA). The Lumenal segment spans residues 93–98 (DQLPLQ). Residues 99–119 (TYTAVYYVLADLVMLTLYFYY) form a helical membrane-spanning segment. Residues 120-134 (KFRTRPSLLSAPINS) are Cytoplasmic-facing. A helical transmembrane segment spans residues 135–155 (VLLFLMGMACATPLLSAAGPV). Residues 156–182 (AAPREAFRGRALLSVESGSKPFTRQEV) are Lumenal-facing. Residues 183–203 (IGFVIGSISSVLYLLSRLPQI) traverse the membrane as a helical segment. The 60-residue stretch at 184-243 (GFVIGSISSVLYLLSRLPQIRTNFLRKSTQGISYSLFALVMLGNTLYGLSVLLKNPEEGQ) folds into the PQ-loop 2 domain. Residues 204–214 (RTNFLRKSTQG) lie on the Cytoplasmic side of the membrane. The chain crosses the membrane as a helical span at residues 215–235 (ISYSLFALVMLGNTLYGLSVL). Topologically, residues 236–254 (LKNPEEGQSEGSYLLHHLP) are lumenal. The chain crosses the membrane as a helical span at residues 255-275 (WLVGSLGVLLLDTIISIQFLV). Topologically, residues 276 to 291 (YRRSTAASELEPLLPS) are cytoplasmic. Positions 288-289 (LL) match the Di-leucine motif motif.

The protein belongs to the laat-1 family.

It localises to the lysosome membrane. Amino acid transporter that specifically mediates the pH-dependent export of the cationic amino acids arginine, histidine and lysine from lysosomes. The sequence is that of Lysosomal amino acid transporter 1 homolog from Homo sapiens (Human).